The primary structure comprises 278 residues: MCSDFRRAESGTELLARLEGRSSLKELEPNLFADEDSPVHGDIFEFHGPEGTGKTEMLYHLTARCILPKSEGGLQIEVLFIDTDYHFDMLRLVTVLEHRLSQSSEEAMKLCLARLFLAYCSSSMQLLLTLHSLEALLCSRPSLCLLIVDSLSSFYWIDRVSGGESVALQESTLQKCSQLLERLVTEYRLLLFATTQSLMQKGSDSADGPSSSKHPCDGDMGYRAYLCKAWQRVVKHRVIFSRDDEAKSSRFSLVSRHLKSNSLKKHSFMVRESGVEFC.

Ser-10 carries the post-translational modification Phosphoserine.

Belongs to the RecA family. RAD51 subfamily. In terms of assembly, interacts with RAD51D. Part of the BCDX2 complex consisting of RAD51B, RAD51C, RAD51D and XRCC2; the complex has a ring-like structure arranged into a flat disk around a central channel. In the absence of DNA, the BCDX2 subcomplex XRCC2:RAD51D formed a multimeric ring structure; in the presence of single-stranded DNA it formed a filamentous structure with the ssDNA. Expressed at low level in somatic tissues and at high level in testis.

It is found in the nucleus. In terms of biological role, involved in the homologous recombination repair (HRR) pathway of double-stranded DNA, thought to repair chromosomal fragmentation, translocations and deletions. Part of the RAD51 paralog protein complex BCDX2 which acts in the BRCA1-BRCA2-dependent HR pathway. Upon DNA damage, BCDX2 acts downstream of BRCA2 recruitment and upstream of RAD51 recruitment. BCDX2 binds predominantly to the intersection of the four duplex arms of the Holliday junction and to junction of replication forks. The BCDX2 complex was originally reported to bind single-stranded DNA, single-stranded gaps in duplex DNA and specifically to nicks in duplex DNA. The chain is DNA repair protein XRCC2 (Xrcc2) from Mus musculus (Mouse).